A 517-amino-acid polypeptide reads, in one-letter code: Synaptic vesicular amine transporter (517 aa).

The Cytoplasmic portion of the chain corresponds to M1–K20. Residues L21–V41 form a helical membrane-spanning segment. Topologically, residues P42–V132 are extracellular. N56, N83, N84, N91, and N113 each carry an N-linked (GlcNAc...) asparagine glycan. Positions E100–D119 are disordered. The span at T105–T115 shows a compositional bias: low complexity. The cysteines at positions 120 and 327 are disulfide-linked. Residues Q133–G153 traverse the membrane as a helical segment. Residues L154–P162 are Cytoplasmic-facing. A helical transmembrane segment spans residues I163–S183. Residues S184–R192 lie on the Extracellular side of the membrane. Residues S193–V213 form a helical membrane-spanning segment. At Y214–N222 the chain is on the cytoplasmic side. Residues A223–L245 form a helical membrane-spanning segment. Serotonin contacts are provided by L231 and V235. The Extracellular portion of the chain corresponds to Y246–K251. The helical transmembrane segment at T252–Q274 threads the bilayer. At P275–D294 the chain is on the cytoplasmic side. Residues P295–L314 traverse the membrane as a helical segment. 5 residues coordinate serotonin: N308, I311, E315, F337, and Y344. At E315–W331 the chain is on the extracellular side. A helical membrane pass occupies residues Q332–A355. Topologically, residues H356–R360 are cytoplasmic. The chain crosses the membrane as a helical span at residues W361–A381. Over K382–F392 the chain is Extracellular. The chain crosses the membrane as a helical span at residues G393–V413. D402 lines the serotonin pocket. Over D414 to H417 the chain is Cytoplasmic. A helical transmembrane segment spans residues V418–I438. A serotonin-binding site is contributed by Y436. Residues G439–G443 lie on the Extracellular side of the membrane. Residues G444–V465 traverse the membrane as a helical segment. At F466–D517 the chain is on the cytoplasmic side. 2 positions are modified to phosphoserine; by CK2: S514 and S516.

It belongs to the major facilitator superfamily. Vesicular transporter family. As to quaternary structure, interacts with SLC6A3. In terms of tissue distribution, expressed in striata and substantia nigra.

The protein localises to the cytoplasmic vesicle. The protein resides in the secretory vesicle. It is found in the synaptic vesicle membrane. Its subcellular location is the secretory vesicle membrane. It localises to the cell projection. The protein localises to the axon. The protein resides in the dendrite. It carries out the reaction serotonin(in) + 2 H(+)(out) = serotonin(out) + 2 H(+)(in). The enzyme catalyses dopamine(in) + 2 H(+)(out) = dopamine(out) + 2 H(+)(in). The catalysed reaction is histamine(in) + 2 H(+)(out) = histamine(out) + 2 H(+)(in). With respect to regulation, strongly inhibited by reserpine and tetrabenazine. Also inhibited to a lesser extent by ketanserin and fenfluramine. Reserpine and ketanserin inhibit by blocking the substrate-binding pocket. Tetrabenazine traps SLC18A2/VMAT2 in an occluded conformation and its inhibition is specific to SLC18A2/VMAT2 but not SLC18A1/VMAT1. Its function is as follows. Electrogenic antiporter that exchanges one cationic monoamine with two intravesicular protons across the membrane of secretory and synaptic vesicles. Uses the electrochemical proton gradient established by the V-type proton-pump ATPase to accumulate high concentrations of monoamines inside the vesicles prior to their release via exocytosis. Transports a variety of catecholamines such as dopamine, adrenaline and noradrenaline, histamine, and indolamines such as serotonin. Regulates the transvesicular monoaminergic gradient that determines the quantal size. Mediates somatodendritic dopamine release in hippocampal neurons, likely as part of a regulated secretory pathway that integrates retrograde synaptic signals. Acts as a primary transporter for striatal dopamine loading ensuring impulse-dependent release of dopamine at the synaptic cleft. Responsible for histamine and serotonin storage and subsequent corelease from mast cell granules. This chain is Synaptic vesicular amine transporter (Slc18a2), found in Mus musculus (Mouse).